Reading from the N-terminus, the 145-residue chain is D-aminoacyl-tRNA deacylase (145 aa).

The Gly-cisPro motif, important for rejection of L-amino acids motif lies at 137–138 (GP).

The protein belongs to the DTD family. As to quaternary structure, homodimer.

It localises to the cytoplasm. It catalyses the reaction glycyl-tRNA(Ala) + H2O = tRNA(Ala) + glycine + H(+). The enzyme catalyses a D-aminoacyl-tRNA + H2O = a tRNA + a D-alpha-amino acid + H(+). Functionally, an aminoacyl-tRNA editing enzyme that deacylates mischarged D-aminoacyl-tRNAs. Also deacylates mischarged glycyl-tRNA(Ala), protecting cells against glycine mischarging by AlaRS. Acts via tRNA-based rather than protein-based catalysis; rejects L-amino acids rather than detecting D-amino acids in the active site. By recycling D-aminoacyl-tRNA to D-amino acids and free tRNA molecules, this enzyme counteracts the toxicity associated with the formation of D-aminoacyl-tRNA entities in vivo and helps enforce protein L-homochirality. This chain is D-aminoacyl-tRNA deacylase, found in Idiomarina loihiensis (strain ATCC BAA-735 / DSM 15497 / L2-TR).